The sequence spans 323 residues: Arginase (323 aa).

The Mn(2+) site is built by histidine 119, aspartate 142, histidine 144, and aspartate 146. Residues 144–148 (HADIN), 155–157 (SKN), and aspartate 198 each bind substrate. 2 residues coordinate Mn(2+): aspartate 247 and aspartate 249. Substrate is bound by residues threonine 261 and glutamate 292.

This sequence belongs to the arginase family. In terms of assembly, homotrimer. The cofactor is Mn(2+).

The catalysed reaction is L-arginine + H2O = urea + L-ornithine. The protein operates within nitrogen metabolism; urea cycle; L-ornithine and urea from L-arginine: step 1/1. This is Arginase (aru1) from Schizosaccharomyces pombe (strain 972 / ATCC 24843) (Fission yeast).